A 64-amino-acid chain; its full sequence is Large ribosomal subunit protein bL35 (64 aa).

Belongs to the bacterial ribosomal protein bL35 family.

The protein is Large ribosomal subunit protein bL35 of Vibrio parahaemolyticus serotype O3:K6 (strain RIMD 2210633).